Reading from the N-terminus, the 57-residue chain is Large ribosomal subunit protein bL32 (57 aa).

This sequence belongs to the bacterial ribosomal protein bL32 family.

In Staphylococcus epidermidis (strain ATCC 35984 / DSM 28319 / BCRC 17069 / CCUG 31568 / BM 3577 / RP62A), this protein is Large ribosomal subunit protein bL32.